A 155-amino-acid chain; its full sequence is D-aminoacyl-tRNA deacylase (155 aa).

A Gly-cisPro motif, important for rejection of L-amino acids motif is present at residues 137–138; the sequence is GP.

The protein belongs to the DTD family. As to quaternary structure, homodimer.

It localises to the cytoplasm. The enzyme catalyses glycyl-tRNA(Ala) + H2O = tRNA(Ala) + glycine + H(+). The catalysed reaction is a D-aminoacyl-tRNA + H2O = a tRNA + a D-alpha-amino acid + H(+). Its function is as follows. An aminoacyl-tRNA editing enzyme that deacylates mischarged D-aminoacyl-tRNAs. Also deacylates mischarged glycyl-tRNA(Ala), protecting cells against glycine mischarging by AlaRS. Acts via tRNA-based rather than protein-based catalysis; rejects L-amino acids rather than detecting D-amino acids in the active site. By recycling D-aminoacyl-tRNA to D-amino acids and free tRNA molecules, this enzyme counteracts the toxicity associated with the formation of D-aminoacyl-tRNA entities in vivo and helps enforce protein L-homochirality. In Paracidovorax citrulli (strain AAC00-1) (Acidovorax citrulli), this protein is D-aminoacyl-tRNA deacylase.